Here is a 544-residue protein sequence, read N- to C-terminus: MYFSQNAIILVMLMFVISAVFYATIDYKTKEVEDEIKIKEVSLYEKNLINTIDRNIDKIVEDAFVNASYKIMKERKFFTASSEAVAYITSYIKNETKESLNNVNYGYSNISYNISSVKISPTYDPLVVHLYCEIDIKYSKKLNNGELIALKPIVINRDIKLSRIPDPYVYLNKFYYTWGYEKKINIYNFPNDNYNRTFCIILNSSNFNYSEMHNPQSPTELRVIGWDSVSNKIILLPYWVQTWREGNNDVSVIWVRANKNEIYNYNNGQGYIYILYNSTTPVDRQDPEHTFIFFDDFNYFNPDKWDSVGYFIINNSKITVIAGAGSSVYTKQTYGTRYELIFRANFTPSHAQTIGFFTQLSDNDGVGWDMYDWTGNNPELYMRVGYSGSDIGDYVPNSNKYLNKFYIYDLKRISTTDLNFTIFNDTLDIEYSNSFTNGNKGNNYPISITALINLNTNVTVDWIFLKDINDITTTVPPIGVDEYPNLDYKEEKPKTFTGTIYYGEPGKYILVYNSTYSIIGLYTNKTDYWLYPNMPGYKPLIEEN.

A signal peptide spans 1 to 22; the sequence is MYFSQNAIILVMLMFVISAVFY.

This is an uncharacterized protein from Methanocaldococcus jannaschii (strain ATCC 43067 / DSM 2661 / JAL-1 / JCM 10045 / NBRC 100440) (Methanococcus jannaschii).